The sequence spans 1863 residues: Breast cancer type 1 susceptibility protein homolog (1863 aa).

Met-1 carries the N-acetylmethionine modification. The RING-type zinc finger occupies 24-65 (CPICLELIKEPVSTKCDHIFCKFCMLKLLNQKKGPSQCPLCK). Lys-109 participates in a covalent cross-link: Glycyl lysine isopeptide (Lys-Gly) (interchain with G-Cter in SUMO2). Ser-114 bears the Phosphoserine mark. Residues 231-267 (TDVTNTEHHQPSNNDLNTTEKRATERHPEKYQGSSVS) are disordered. Over residues 248–260 (TTEKRATERHPEK) the composition is skewed to basic and acidic residues. A Glycyl lysine isopeptide (Lys-Gly) (interchain with G-Cter in SUMO2) cross-link involves residue Lys-301. The interval 306–338 (NKSKQPGLARSQHNRWAGSKETCNDRQTPSTEK) is disordered. Lys-339 is covalently cross-linked (Glycyl lysine isopeptide (Lys-Gly) (interchain with G-Cter in SUMO2)). 4 positions are modified to phosphoserine: Ser-395, Ser-398, Ser-423, and Ser-434. Residues Lys-443, Lys-459, and Lys-519 each participate in a glycyl lysine isopeptide (Lys-Gly) (interchain with G-Cter in SUMO2) cross-link. Ser-551 is modified (phosphoserine). Residues Lys-583 and Lys-654 each participate in a glycyl lysine isopeptide (Lys-Gly) (interchain with G-Cter in SUMO2) cross-link. Residues 650-735 (IKKKKYNQMP…LPREEKEEKL (86 aa)) are disordered. 3 positions are modified to phosphoserine: Ser-694, Ser-708, and Ser-725. The span at 705 to 716 (APGSFTNCSNTS) shows a compositional bias: polar residues. Glycyl lysine isopeptide (Lys-Gly) (interchain with G-Cter in SUMO2) cross-links involve residues Lys-734 and Lys-739. Phosphoserine occurs at positions 753 and 840. Glycyl lysine isopeptide (Lys-Gly) (interchain with G-Cter in SUMO2) cross-links involve residues Lys-918 and Lys-987. Residue Ser-988 is modified to Phosphoserine; by CHEK2. The residue at position 1009 (Ser-1009) is a Phosphoserine. Residues 1045–1066 (NEVGSSTNEVGSSINEVGSSDE) form a disordered region. Lys-1079 participates in a covalent cross-link: Glycyl lysine isopeptide (Lys-Gly) (interchain with G-Cter in SUMO2). 11 positions are modified to phosphoserine: Ser-1143, Ser-1189, Ser-1191, Ser-1211, Ser-1217, Ser-1218, Ser-1280, Ser-1328, Ser-1336, Ser-1342, and Ser-1387. The disordered stretch occupies residues 1181–1216 (VQRGELSRSPSPFTHTHLAQGYRRGAKKLESSEENL). Residues 1322-1394 (KQMRHQSESQ…LSSQSDILTT (73 aa)) are disordered. A compositionally biased stretch (acidic residues) spans 1342-1360 (SDDEERGTDLEENNQEEQG). Positions 1373 to 1394 (ESETSVSEDCSGLSSQSDILTT) are enriched in polar residues. Thr-1394 carries the phosphothreonine modification. Residues 1397–1424 (RDTMQDNLIKLQQEMAELEAVLEQHGSQ) form an interaction with PALB2 region. Phosphoserine is present on residues Ser-1423, Ser-1457, Ser-1524, and Ser-1542. The tract at residues 1440–1504 (EDLRNPEQST…RSSPSKCPSL (65 aa)) is disordered. Residues 1445 to 1470 (PEQSTSEKAVLTSQKSSEYPISQNPE) show a composition bias toward polar residues. Disordered stretches follow at residues 1540–1597 (EESG…PSST) and 1610–1642 (SAQSPAAAQTTNTAGYNAMEESVSREKPELTAS). A compositionally biased stretch (polar residues) spans 1610–1624 (SAQSPAAAQTTNTAG). BRCT domains are found at residues 1642-1736 (STER…DFEV) and 1756-1855 (QDRK…TYLI).

As to quaternary structure, heterodimer with BARD1. Part of the BRCA1-associated genome surveillance complex (BASC), which contains BRCA1, MSH2, MSH6, MLH1, ATM, BLM, PMS2 and the MRE11-RAD50-NBN protein (MRN) complex. This association could be a dynamic process changing throughout the cell cycle and within subnuclear domains. Component of the BRCA1-A complex, at least composed of BRCA1, BARD1, UIMC1/RAP80, ABRAXAS1, BRCC3/BRCC36, BABAM2 and BABAM1/NBA1. Interacts (via the BRCT domains) with ABRAXAS1 (phosphorylated form); this is important for recruitment to sites of DNA damage. Can form a heterotetramer with two molecules of ABRAXAS1 (phosphorylated form). Component of the BRCA1-RBBP8 complex. Interacts (via the BRCT domains) with RBBP8 ('Ser-327' phosphorylated form); the interaction ubiquitinates RBBP8, regulates CHEK1 activation, and involves RBBP8 in BRCA1-dependent G2/M checkpoint control on DNA damage. Associates with RNA polymerase II holoenzyme. Interacts with SMC1A, NELFB, DCLRE1C, CLSPN. CHEK1, CHEK2, BAP1, BRCC3, UBXN1 and PCLAF. Interacts (via BRCT domains) with BRIP1 (phosphorylated form). Interacts with FANCD2 (ubiquitinated form). Interacts with H2AX (phosphorylated on 'Ser-140'). Interacts (via the BRCT domains) with ACACA (phosphorylated form); the interaction prevents dephosphorylation of ACACA. Part of a BRCA complex containing BRCA1, BRCA2 and PALB2. Interacts directly with PALB2; the interaction is essential for its function in HRR. Interacts directly with BRCA2; the interaction occurs only in the presence of PALB2 which serves as the bridging protein. Interacts (via the BRCT domains) with LMO4; the interaction represses the transcriptional activity of BRCA1. Interacts (via the BRCT domains) with CCAR2 (via N-terminus); the interaction represses the transcriptional activator activity of BRCA1. Interacts with EXD2. Interacts (via C-terminus) with DHX9; this interaction is direct and links BRCA1 to the RNA polymerase II holoenzyme. Interacts with DNA helicase ZGRF1; the interaction is increased following DNA damage induction. Post-translationally, phosphorylated in response to IR, UV, and various stimuli that cause checkpoint activation, probably by ATM or ATR. Phosphorylation at Ser-988 by CHEK2 regulates mitotic spindle assembly. Phosphorylation by AURKA regulates centrosomal microtubule nucleation. Autoubiquitinated, undergoes 'Lys-6'-linked polyubiquitination. 'Lys-6'-linked polyubiquitination does not promote degradation.

It localises to the nucleus. It is found in the chromosome. The protein resides in the cytoplasm. It carries out the reaction S-ubiquitinyl-[E2 ubiquitin-conjugating enzyme]-L-cysteine + [acceptor protein]-L-lysine = [E2 ubiquitin-conjugating enzyme]-L-cysteine + N(6)-ubiquitinyl-[acceptor protein]-L-lysine.. The protein operates within protein modification; protein ubiquitination. In terms of biological role, E3 ubiquitin-protein ligase that specifically mediates the formation of 'Lys-6'-linked polyubiquitin chains and plays a central role in DNA repair by facilitating cellular responses to DNA damage. It is unclear whether it also mediates the formation of other types of polyubiquitin chains. The BRCA1-BARD1 heterodimer coordinates a diverse range of cellular pathways such as DNA damage repair, ubiquitination and transcriptional regulation to maintain genomic stability. Regulates centrosomal microtubule nucleation. Required for appropriate cell cycle arrests after ionizing irradiation in both the S-phase and the G2 phase of the cell cycle. Required for FANCD2 targeting to sites of DNA damage. Inhibits lipid synthesis by binding to inactive phosphorylated ACACA and preventing its dephosphorylation. Contributes to homologous recombination repair (HRR) via its direct interaction with PALB2, fine-tunes recombinational repair partly through its modulatory role in the PALB2-dependent loading of BRCA2-RAD51 repair machinery at DNA breaks. Component of the BRCA1-RBBP8 complex which regulates CHEK1 activation and controls cell cycle G2/M checkpoints on DNA damage via BRCA1-mediated ubiquitination of RBBP8. Acts as a transcriptional activator. This chain is Breast cancer type 1 susceptibility protein homolog (BRCA1), found in Pongo pygmaeus (Bornean orangutan).